Consider the following 448-residue polypeptide: Tubulin beta chain (448 aa).

8 residues coordinate GTP: Gln-11, Glu-69, Ser-138, Gly-142, Thr-143, Gly-144, Asn-204, and Asn-226. Glu-69 lines the Mg(2+) pocket. The tract at residues 425 to 448 (YQDASISEGEEEYLEEEEPLEHEE) is disordered. Over residues 432 to 448 (EGEEEYLEEEEPLEHEE) the composition is skewed to acidic residues.

The protein belongs to the tubulin family. Dimer of alpha and beta chains. A typical microtubule is a hollow water-filled tube with an outer diameter of 25 nm and an inner diameter of 15 nM. Alpha-beta heterodimers associate head-to-tail to form protofilaments running lengthwise along the microtubule wall with the beta-tubulin subunit facing the microtubule plus end conferring a structural polarity. Microtubules usually have 13 protofilaments but different protofilament numbers can be found in some organisms and specialized cells. Requires Mg(2+) as cofactor.

The protein localises to the cytoplasm. It localises to the cytoskeleton. Functionally, tubulin is the major constituent of microtubules, a cylinder consisting of laterally associated linear protofilaments composed of alpha- and beta-tubulin heterodimers. Microtubules grow by the addition of GTP-tubulin dimers to the microtubule end, where a stabilizing cap forms. Below the cap, tubulin dimers are in GDP-bound state, owing to GTPase activity of alpha-tubulin. The chain is Tubulin beta chain from Aspergillus flavus.